The sequence spans 85 residues: Small ribosomal subunit protein uS17 (85 aa).

It belongs to the universal ribosomal protein uS17 family. In terms of assembly, part of the 30S ribosomal subunit.

In terms of biological role, one of the primary rRNA binding proteins, it binds specifically to the 5'-end of 16S ribosomal RNA. This chain is Small ribosomal subunit protein uS17, found in Actinobacillus succinogenes (strain ATCC 55618 / DSM 22257 / CCUG 43843 / 130Z).